A 24-amino-acid chain; its full sequence is Brevinin-1Lb (24 aa).

Cysteine 18 and cysteine 24 form a disulfide bridge.

Expressed by the skin glands.

It localises to the secreted. Functionally, antibacterial activity against Gram-positive bacterium S.aureus and Gram-negative bacterium E.coli. This chain is Brevinin-1Lb, found in Rana luteiventris (Columbia spotted frog).